Here is a 925-residue protein sequence, read N- to C-terminus: Calpain-B (925 aa).

One can recognise a Calpain catalytic domain in the interval 259 to 558 (MFEDPDFPAT…FDRVEICNLS (300 aa)). Residues C314, H470, and N498 contribute to the active site. The domain III stretch occupies residues 559-728 (PDSLTEDQQH…TRNNMEENDD (170 aa)). A disordered region spans residues 723–753 (MEENDDEVGFGETDDRIAPSLPPPTPKEEDD). The tract at residues 729–748 (EVGFGETDDRIAPSLPPPTP) is linker. The tract at residues 749–925 (KEEDDPQRIA…DDWLERTIYS (177 aa)) is domain IV. EF-hand domains are found at residues 796–831 (FSKD…IAKW) and 826–861 (TDIA…AGYH). Ca(2+) contacts are provided by D809, D811, S813, R815, E820, D839, T843, S845, and H850.

It belongs to the peptidase C2 family. Post-translationally, undergoes calcium-dependent autolytic cleavage between Asn-74 and Ala-75 and between Gln-224 and Asn-225 to produce two major products, calpain B catalytic subunit 1 and calpain B catalytic subunit 2. This autolysis is necessary for activation of the protein. Strongly expressed in follicular and border cells of the oocyte. Ubiquitously expressed in early embryos. Localized to the trachea and their orifices, and to the larynx of late embryos. Restricted to the salivary gland in third instar larvae.

The protein localises to the cytoplasm. Its subcellular location is the membrane. With respect to regulation, activated by millimolar concentrations of calcium. Calcium-regulated non-lysosomal thiol-protease. This chain is Calpain-B, found in Drosophila melanogaster (Fruit fly).